The following is an 83-amino-acid chain: U5-theraphotoxin-Hs1b 2 (83 aa).

The signal sequence occupies residues 1–21 (MQTSMFLTLTGLVLLFVVCYA). A propeptide spanning residues 22–49 (SESEEKEFPKELLSSIFAADSDFKEEER) is cleaved from the precursor. 3 disulfide bridges follow: C51–C63, C56–C68, and C62–C75.

Belongs to the neurotoxin 10 (Hwtx-1) family. 51 (Hntx-8) subfamily. Hntx-8 sub-subfamily. As to expression, expressed by the venom gland.

The protein resides in the secreted. Its function is as follows. Agglutinates erythrocytes. This Cyriopagopus schmidti (Chinese bird spider) protein is U5-theraphotoxin-Hs1b 2.